We begin with the raw amino-acid sequence, 1120 residues long: Vacuolar cation-chloride cotransporter 1 (1120 aa).

Residues 1–21 (MVSRFYQIPGTHRPSSAISSS) are disordered. The Cytoplasmic portion of the chain corresponds to 1–62 (MVSRFYQIPG…YDPDNPNKDK (62 aa)). S34 carries the post-translational modification Phosphoserine. A helical transmembrane segment spans residues 63 to 83 (LGTYDGVFVPTALNVLSILMF). Over 84–85 (LR) the chain is Vacuolar. A helical transmembrane segment spans residues 86–106 (FGFILGQLGIICTIGLLLLSY). The Cytoplasmic portion of the chain corresponds to 107 to 145 (TINLLTTLSISAISTNGTVRGGGAYYMISRSLGPEFGGS). A helical membrane pass occupies residues 146–166 (IGLVFFLGQVFNAGMNAVGII). The Vacuolar segment spans residues 167–193 (EPLLYNLGYSAQGEPPAALGELLPRGH). A helical transmembrane segment spans residues 194–214 (WHEFTYATVILFLCFSVAFVG). At 215 to 221 (SQTVSRA) the chain is on the cytoplasmic side. Residues 222–242 (GNILFLVLAASIFSIPLSALI) traverse the membrane as a helical segment. At 243–283 (RSPFTEGGISYTGPSWQTFHDNLLPHLTKGAAGSLLKGKET) the chain is on the vacuolar side. The helical transmembrane segment at 284–304 (FNDLFGVFFPATAGIFAGAGM) threads the bilayer. At 305–317 (SSELRKPSKSIPK) the chain is on the cytoplasmic side. The helical transmembrane segment at 318–338 (GTLWGLLFTFICYAVVVFSMG) threads the bilayer. The Vacuolar segment spans residues 339-360 (CSIPRRSLYDEVQIIQTISSVQ). The chain crosses the membrane as a helical span at residues 361–381 (WVIFMGEMATSLFSIIVGMLG). The Cytoplasmic segment spans residues 382-393 (AAYVLEAIAKDN). Residues 394–414 (IIPGLEIFAHSPLYSLIFTWI) traverse the membrane as a helical segment. The Vacuolar portion of the chain corresponds to 415-430 (LTQLCLFSDVNKIATF). A helical membrane pass occupies residues 431–451 (ITMTFLMTFVVMNLACFLLGI). Over 452 to 462 (SSAPNFRPSFK) the chain is Cytoplasmic. Residues 463–482 (YFNRYTTAIGALLSVVAMLI) form a helical membrane-spanning segment. Topologically, residues 483–487 (VDGIS) are vacuolar. A helical membrane pass occupies residues 488–506 (ASVLFLAMILLFLFIHYFS). The Cytoplasmic segment spans residues 507–1120 (PPKSWGDVSQ…SQTMTVTTAL (614 aa)). Residues S654, S915, and S918 each carry the phosphoserine modification.

It belongs to the SLC12A transporter family.

Its subcellular location is the vacuole membrane. Functionally, catalyzes the coordinated symport of chloride with potassium ions across the vacuolar membrane. Involved in vacuolar osmoregulation. This chain is Vacuolar cation-chloride cotransporter 1, found in Saccharomyces cerevisiae (strain ATCC 204508 / S288c) (Baker's yeast).